Reading from the N-terminus, the 489-residue chain is MSLASLDLNALWLEHSAVIATLFAFGTALFLVSRSQKQSLNLPRFEVTNDVLKTIEEAHAQYPDDPFILSMVGMELAILPRSGIDVIKTLPEDQVSIKRHHHDVFLGEYTYMGTKSPEFDEAMRYDLTRNTPTVLASFVAEVQYAVEDSFGRPDQWTAFQPRACMSKIASLMSGRAFVGLPLSRDNTWVDATVRYTQDVTRAWLVLRTIPWVLRPFVAPFLPQVRSLKNQRRMTEERLTPLLDPSNAKNRDEIPGGDMLRWFRQRYPQGPTPKQLARDQLLATFASIYNLSNALSYLLFDLATYPEHIEPLRQELQEVLKGEPVNKENIQKLKKLDSFIRESQRLSPPSLANMPRIVTNPRGLKLPSGHTIPCGMRIMVRAHTLNLDPNLWPNPTRFDGFRFSKLREIPGNTFKYQHATTGTDNINFGHGLWACPGRHFASSQMKVVLAHLLLNYDIKLPNRMEKPQQQHFGLAIVPDTEQMVLLKIRG.

A helical membrane pass occupies residues 12–32; it reads WLEHSAVIATLFAFGTALFLV. Asn-289 is a glycosylation site (N-linked (GlcNAc...) asparagine). Residue Cys-434 participates in heme binding.

The protein belongs to the cytochrome P450 family. Heme serves as cofactor.

It is found in the membrane. It functions in the pathway mycotoxin biosynthesis. Functionally, cytochrome P450 monooxygenase; part of the gene cluster that mediates the biosynthesis of acetylaranotin, a member of the epipolythiodioxopiperazine (ETP) class of toxins characterized by a disulfide-bridged cyclic dipeptide. The first step of acetylaranotin biosynthesis is performed by the NRPS ataP which produces diketopiperazine cyclo-L-Phe-L-Phe via the condensation of 2 phenylalanines (L-Phe). The ataC domain of ataTC then catalyzes the formation of bishydroxylation of cyclo-L-Phe-L-Phe. The glutathione S-transferase domain ataG in ataIMG further catalyzes the conjugation of two glutathiones to the bishydroxylated intermediate. Next, the dipeptidase ataJ removes the Glu residues. The following step is performed by the carbon sulfur lyase domain ataI of ataIMG which may convert the bis-cysteinyl adduct to yield an epidithiol intermediate. The ataT domain from ataTC then catalyzes the oxidation of the free dithiols, followed by a cyclization step catalyzed by the cytochrome P450 ataF. AtaF probably acts as an epoxidase to promote a dual epoxidation formation at C8 and C9 along with C8' and C9', followed by the spontaneous nucleophilic attack of the amide nitrogens N10 and N10' to yield an intermediate with the pyrrolidine partial structure. The final steps of acetylaranotin biosynthesis involve the acetylation and ring rearrangement of an epitetrathiodiketopiperazine intermediate to produce acetylaranotin. AtaH probably catalyzes the acetylation of epitetrathiodiketopiperazine to produce a diacetate and ataY is responsible for the formation of the dihydrooxepin moiety that converts the diacetate intermediate to acetylaranotin via acetylapoaranotin. Both enzymes could function independently in the absence of the other. The acetylaranotin bis-thiomethyltransferase ataS located outside of acetylaranotin gene cluster is the main thiomethyltransferase responsible for converting acetylaranotin and its related intermediates to their methylated forms. The chain is Cytochrome P450 monooxygenase ataF from Aspergillus terreus (strain NIH 2624 / FGSC A1156).